Consider the following 32-residue polypeptide: Dermatoxin-J2 (32 aa).

Q32 carries the post-translational modification Glutamine amide.

In terms of tissue distribution, expressed by the skin glands.

Its subcellular location is the secreted. Its function is as follows. Antimicrobial peptide. This Phasmahyla jandaia (Jandaia leaf frog) protein is Dermatoxin-J2.